The chain runs to 215 residues: CASP-like protein UU3 (215 aa).

The Cytoplasmic segment spans residues 1-44; the sequence is MATAWESEYFDKVTPGERERAVPPMVPQQTPPPVYIQPQVSRNG. Residues 45–65 traverse the membrane as a helical segment; it reads IVASIVLRLLTLIFAVVALAV. Residues 66–93 lie on the Extracellular side of the membrane; sequence LASNTGSFQVSTGSATSVKTIKFTILSA. The helical transmembrane segment at 94 to 114 threads the bilayer; it reads FTYLFAVCGVVAVYSLLLIIV. Residues 115-128 are Cytoplasmic-facing; that stretch reads EMIDLAVRGFTTHT. Residues 129-149 traverse the membrane as a helical segment; the sequence is LVAIFVFVLDQTMAYVLISAA. The Extracellular segment spans residues 150–185; that stretch reads SASANGVKVSRDESNITGYKFDISCSNLGIDDYCTK. An N-linked (GlcNAc...) asparagine glycan is attached at asparagine 164. The chain crosses the membrane as a helical span at residues 186-206; sequence ASASVAIAFIAFLFMAITAGV. Residues 207-215 lie on the Cytoplasmic side of the membrane; it reads SARRLFKLP.

The protein belongs to the Casparian strip membrane proteins (CASP) family. As to quaternary structure, homodimer and heterodimers.

The protein resides in the cell membrane. This chain is CASP-like protein UU3, found in Physcomitrium patens (Spreading-leaved earth moss).